A 471-amino-acid polypeptide reads, in one-letter code: Ubiquitin carboxyl-terminal hydrolase calypso (471 aa).

The UCH catalytic domain occupies 45 to 276 (GWLELESDPG…IRFNLMAVVP (232 aa)). Cysteine 131 acts as the Nucleophile in catalysis. The active-site Proton donor is histidine 213. The interval 307–326 (DEQGESGNGDSQRPDTPTTL) is disordered. Positions 314 to 326 (NGDSQRPDTPTTL) are enriched in polar residues. The 29-residue stretch at 375-403 (NYDKFICTFLSMLAHQGVLGELVSQHLLP) folds into the ULD domain. Positions 405 to 471 (KKVSGQGAAN…KGRNKCRKRK (67 aa)) are positively charged C-terminal tail required for binding nucleosomes. The tract at residues 412 to 471 (AANRISKQSNTASAGGSTTGASASTPKTQQQQAAAAKNGKSPSKTPGRRRKGRNKCRKRK) is disordered. The span at 422–447 (TASAGGSTTGASASTPKTQQQQAAAA) shows a compositional bias: low complexity. The span at 457-471 (PGRRRKGRNKCRKRK) shows a compositional bias: basic residues.

This sequence belongs to the peptidase C12 family. BAP1 subfamily. As to quaternary structure, catalytic component of the polycomb repressive deubiquitinase (PR-DUB) complex, at least composed of caly/calypso, Asx and sba (MBD5/6 homolog). The PR-DUB complex associates with nucleosomes to mediate deubiquitination of histone H2AK118ub1 substrates; the association requires the positively charged C-terminal tail of caly, probably due to direct binding of DNA. Interacts (via ULD domain) with Asx (via DEUBAD domain); the interaction produces a stable heterodimer with a composite binding site for ubiquitin. Homodimerizes (via coiled-coil hinge-region between the UCH and ULD domains) to mediate assembly of 2 copies of the caly-Asx heterodimer into a bisymmetric tetramer; dimerization enhances PR-DUB association with nucleosomes.

Its subcellular location is the nucleus. The enzyme catalyses Thiol-dependent hydrolysis of ester, thioester, amide, peptide and isopeptide bonds formed by the C-terminal Gly of ubiquitin (a 76-residue protein attached to proteins as an intracellular targeting signal).. Catalytic component of the polycomb repressive deubiquitinase (PR-DUB) complex, a complex that specifically mediates deubiquitination of histone H2A monoubiquitinated at 'Lys-119' (H2AK118ub1). Mediates bisymmetric organization of the PR-DUB complex and is involved in association with nucleosomes to mediate deubiquitination. Does not deubiquitinate monoubiquitinated histone H2B. Required to maintain the transcriptionally repressive state of homeotic genes throughout development. The PR-DUB complex has weak or no activity toward 'Lys-48'- and 'Lys-63'-linked polyubiquitin chains. Polycomb group (PcG) protein. In Drosophila sechellia (Fruit fly), this protein is Ubiquitin carboxyl-terminal hydrolase calypso.